The chain runs to 712 residues: Ribosomal RNA large subunit methyltransferase K/L (712 aa).

One can recognise a THUMP domain in the interval 43–154; sequence LAYRITLWTR…NGQLTISMNF (112 aa).

This sequence belongs to the methyltransferase superfamily. RlmKL family.

It is found in the cytoplasm. It carries out the reaction guanosine(2445) in 23S rRNA + S-adenosyl-L-methionine = N(2)-methylguanosine(2445) in 23S rRNA + S-adenosyl-L-homocysteine + H(+). It catalyses the reaction guanosine(2069) in 23S rRNA + S-adenosyl-L-methionine = N(2)-methylguanosine(2069) in 23S rRNA + S-adenosyl-L-homocysteine + H(+). Functionally, specifically methylates the guanine in position 2445 (m2G2445) and the guanine in position 2069 (m7G2069) of 23S rRNA. In Shewanella frigidimarina (strain NCIMB 400), this protein is Ribosomal RNA large subunit methyltransferase K/L.